The sequence spans 281 residues: E2F-associated phosphoprotein (281 aa).

Methionine 1 carries the post-translational modification N-acetylmethionine. The interval methionine 1–glutamate 27 is disordered. The span at glutamate 15–glutamate 27 shows a compositional bias: acidic residues. Serine 17 carries the phosphoserine modification. At threonine 37 the chain carries Phosphothreonine. 2 positions are modified to phosphoserine: serine 109 and serine 111. Residues proline 222–glutamate 245 form a disordered region. Positions arginine 225–arginine 235 are enriched in basic residues. The span at serine 236–glutamate 245 shows a compositional bias: basic and acidic residues.

As to quaternary structure, interacts with E2F1. The C-terminal half binds the N-terminal of E2F1. Also interacts with E2F2 and E2F3, but not E2F4.

It localises to the cytoplasm. It is found in the nucleus. Functionally, may play an important role in the fine-tuning of both major E2F1 activities, the regulation of the cell-cycle and the induction of apoptosis. Promotes S-phase entry, and inhibits p14(ARP) expression. The chain is E2F-associated phosphoprotein (Eapp) from Mus musculus (Mouse).